We begin with the raw amino-acid sequence, 329 residues long: UDP-3-O-acylglucosamine N-acyltransferase (329 aa).

His-224 serves as the catalytic Proton acceptor.

Belongs to the transferase hexapeptide repeat family. LpxD subfamily. Homotrimer.

It carries out the reaction a UDP-3-O-[(3R)-3-hydroxyacyl]-alpha-D-glucosamine + a (3R)-hydroxyacyl-[ACP] = a UDP-2-N,3-O-bis[(3R)-3-hydroxyacyl]-alpha-D-glucosamine + holo-[ACP] + H(+). It functions in the pathway bacterial outer membrane biogenesis; LPS lipid A biosynthesis. In terms of biological role, catalyzes the N-acylation of UDP-3-O-acylglucosamine using 3-hydroxyacyl-ACP as the acyl donor. Is involved in the biosynthesis of lipid A, a phosphorylated glycolipid that anchors the lipopolysaccharide to the outer membrane of the cell. The sequence is that of UDP-3-O-acylglucosamine N-acyltransferase from Albidiferax ferrireducens (strain ATCC BAA-621 / DSM 15236 / T118) (Rhodoferax ferrireducens).